The sequence spans 250 residues: Cyclin-Q (250 aa).

Met-1 is subject to N-acetylmethionine. Positions 1–10 are enriched in basic and acidic residues; the sequence is MEAVRPDSCE. Residues 1 to 22 are disordered; that stretch reads MEAVRPDSCERGTAAARAEERP.

Belongs to the cyclin family. Cyclin-like FAM58 subfamily. As to quaternary structure, associates with CDK10 to promote its kinase activity.

In terms of biological role, activating cyclin for the cyclin-associated kinase CDK10. The chain is Cyclin-Q (Ccnq) from Rattus norvegicus (Rat).